The sequence spans 526 residues: Probable di/tripeptide-binding protein 5 (526 aa).

The first 21 residues, 1–21 (MRLAAFSLFLAPLLLAQPAAA), serve as a signal peptide directing secretion.

Belongs to the bacterial solute-binding protein 5 family. The complex is composed of two ATP-binding proteins (DppD and DppF), two transmembrane proteins (DppB and DppC) and a solute-binding protein (DppA5). Five orthologous SBPs (DppA1-A5) are present in P.aeruginosa, which increases the substrate specificity of the DppBCDF transporter.

Part of the ABC transporter DppABCDF involved in the uptake of various di/tripeptides. The polypeptide is Probable di/tripeptide-binding protein 5 (Pseudomonas aeruginosa (strain UCBPP-PA14)).